We begin with the raw amino-acid sequence, 359 residues long: 5-formaminoimidazole-4-carboxamide-1-(beta)-D-ribofuranosyl 5'-monophosphate synthetase (359 aa).

Positions 27 and 94 each coordinate 5-amino-1-(5-phospho-beta-D-ribosyl)imidazole-4-carboxamide. Residues 116-340 (RRLLRWESER…FGEIVTMGRR (225 aa)) form the ATP-grasp domain. Residues 146 to 208 (PEDI…TNFC) and glutamate 230 each bind ATP. Residue asparagine 258 participates in 5-amino-1-(5-phospho-beta-D-ribosyl)imidazole-4-carboxamide binding. Residues glutamine 297 and glutamate 310 each contribute to the Mg(2+) site.

It belongs to the phosphohexose mutase family. The cofactor is Mg(2+). It depends on Mn(2+) as a cofactor.

The enzyme catalyses 5-amino-1-(5-phospho-beta-D-ribosyl)imidazole-4-carboxamide + formate + ATP = 5-formamido-1-(5-phospho-D-ribosyl)imidazole-4-carboxamide + ADP + phosphate. It participates in purine metabolism; IMP biosynthesis via de novo pathway; 5-formamido-1-(5-phospho-D-ribosyl)imidazole-4-carboxamide from 5-amino-1-(5-phospho-D-ribosyl)imidazole-4-carboxamide (formate route): step 1/1. Catalyzes the ATP- and formate-dependent formylation of 5-aminoimidazole-4-carboxamide-1-beta-d-ribofuranosyl 5'-monophosphate (AICAR) to 5-formaminoimidazole-4-carboxamide-1-beta-d-ribofuranosyl 5'-monophosphate (FAICAR) in the absence of folates. This is 5-formaminoimidazole-4-carboxamide-1-(beta)-D-ribofuranosyl 5'-monophosphate synthetase from Methanopyrus kandleri (strain AV19 / DSM 6324 / JCM 9639 / NBRC 100938).